The sequence spans 762 residues: 5-methyltetrahydropteroyltriglutamate--homocysteine methyltransferase (762 aa).

5-methyltetrahydropteroyltri-L-glutamate is bound by residues 17–20 (REWK) and Lys111. L-homocysteine is bound by residues 435 to 437 (IGS) and Glu488. L-methionine is bound by residues 435–437 (IGS) and Glu488. Residues 519–520 (RC) and Trp565 contribute to the 5-methyltetrahydropteroyltri-L-glutamate site. L-homocysteine is bound at residue Asp603. Asp603 contributes to the L-methionine binding site. 5-methyltetrahydropteroyltri-L-glutamate is bound at residue Glu609. Positions 645, 647, and 669 each coordinate Zn(2+). The active-site Proton donor is the His698. Residue Cys730 coordinates Zn(2+).

This sequence belongs to the vitamin-B12 independent methionine synthase family. Requires Zn(2+) as cofactor.

The catalysed reaction is 5-methyltetrahydropteroyltri-L-glutamate + L-homocysteine = tetrahydropteroyltri-L-glutamate + L-methionine. It functions in the pathway amino-acid biosynthesis; L-methionine biosynthesis via de novo pathway; L-methionine from L-homocysteine (MetE route): step 1/1. Its function is as follows. Catalyzes the transfer of a methyl group from 5-methyltetrahydrofolate to homocysteine resulting in methionine formation. This is 5-methyltetrahydropteroyltriglutamate--homocysteine methyltransferase from Bacillus mycoides (strain KBAB4) (Bacillus weihenstephanensis).